Consider the following 156-residue polypeptide: MSEQNNTEMAFQIQRIYTKDISFEAPNAPQVFQQDWQPEVKLDLDTASSQLAEDVYEVVLRVTVTASLGEETAFLCEVQQGGIFSIAGIDGTQLAHCLGAYCPNILFPYARECITSLVSRGTFPQLNLAPVNFDALFMNYLQQQAEGEGAEQRQDA.

It belongs to the SecB family. As to quaternary structure, homotetramer, a dimer of dimers. One homotetramer interacts with 1 SecA dimer.

Its subcellular location is the cytoplasm. In terms of biological role, one of the proteins required for the normal export of preproteins out of the cell cytoplasm. It is a molecular chaperone that binds to a subset of precursor proteins, maintaining them in a translocation-competent state. It also specifically binds to its receptor SecA. This is Protein-export protein SecB from Yersinia enterocolitica serotype O:8 / biotype 1B (strain NCTC 13174 / 8081).